The chain runs to 250 residues: 2,3-bisphosphoglycerate-dependent phosphoglycerate mutase (250 aa).

Residues 8 to 15, 21 to 22, arginine 60, 87 to 90, lysine 98, 114 to 115, and 183 to 184 each bind substrate; these read RHGQSAWN, TG, ERHY, RR, and GN. Histidine 9 functions as the Tele-phosphohistidine intermediate in the catalytic mechanism. The active-site Proton donor/acceptor is the glutamate 87.

It belongs to the phosphoglycerate mutase family. BPG-dependent PGAM subfamily. Homodimer.

The catalysed reaction is (2R)-2-phosphoglycerate = (2R)-3-phosphoglycerate. The protein operates within carbohydrate degradation; glycolysis; pyruvate from D-glyceraldehyde 3-phosphate: step 3/5. Catalyzes the interconversion of 2-phosphoglycerate and 3-phosphoglycerate. The sequence is that of 2,3-bisphosphoglycerate-dependent phosphoglycerate mutase from Nitratidesulfovibrio vulgaris (strain DP4) (Desulfovibrio vulgaris).